We begin with the raw amino-acid sequence, 163 residues long: MSRRHAAEKRVILPDMKYNSVLLSRFINNIMKEGKKALAEKIVYSAFDKIEKKHKADPYQTFSNAMNNVKPYLEVTSVRVGGANYQVPTPVDERRGYALASRWIITAATKRSEKMMIDKLAEELFEASNNRGVAIKKKEDTHKMAEANKAFSHFSPKKTKQGN.

The protein belongs to the universal ribosomal protein uS7 family. As to quaternary structure, part of the 30S ribosomal subunit. Contacts proteins S9 and S11.

One of the primary rRNA binding proteins, it binds directly to 16S rRNA where it nucleates assembly of the head domain of the 30S subunit. Is located at the subunit interface close to the decoding center, probably blocks exit of the E-site tRNA. The chain is Small ribosomal subunit protein uS7 from Rickettsia bellii (strain RML369-C).